A 181-amino-acid chain; its full sequence is Caltractin ICL1d (181 aa).

Residues 1 to 29 form a disordered region; it reads MARRGQQPPPQQAPPAQKNQTGKFNPAEF. 4 consecutive EF-hand domains span residues 37–72, 73–108, 110–145, and 146–181; these read EEVL…LGFE, AKNQ…RISE, DSKA…LGET, and MDDS…KTFA. The Ca(2+) site is built by aspartate 50, aspartate 52, threonine 54, serine 56, glutamate 61, aspartate 86, aspartate 88, serine 90, glutamine 92, and glutamate 97.

The protein belongs to the centrin family. Monomer.

The protein localises to the cytoplasm. It is found in the cytoskeleton. In terms of biological role, plays a fundamental role in microtubule organizing center structure and function. Component of the infraciliary lattice (ICL) and the ciliary basal bodies. This chain is Caltractin ICL1d (Icl1d), found in Paramecium tetraurelia.